We begin with the raw amino-acid sequence, 345 residues long: Dihydroorotate dehydrogenase (quinone) (345 aa).

FMN is bound by residues 65–69 (AGLDK) and T89. K69 is a substrate binding site. Residue 114–118 (NRLGF) participates in substrate binding. Residues N146 and N179 each contribute to the FMN site. Residue N179 coordinates substrate. S182 acts as the Nucleophile in catalysis. N184 provides a ligand contact to substrate. Residues K224 and T252 each coordinate FMN. Substrate is bound at residue 253 to 254 (NT). Residues G275, G304, and 325–326 (YT) contribute to the FMN site.

This sequence belongs to the dihydroorotate dehydrogenase family. Type 2 subfamily. Monomer. The cofactor is FMN.

It localises to the cell membrane. The enzyme catalyses (S)-dihydroorotate + a quinone = orotate + a quinol. The protein operates within pyrimidine metabolism; UMP biosynthesis via de novo pathway; orotate from (S)-dihydroorotate (quinone route): step 1/1. In terms of biological role, catalyzes the conversion of dihydroorotate to orotate with quinone as electron acceptor. The polypeptide is Dihydroorotate dehydrogenase (quinone) (Leptothrix cholodnii (strain ATCC 51168 / LMG 8142 / SP-6) (Leptothrix discophora (strain SP-6))).